The following is a 694-amino-acid chain: Acetolactate synthase catalytic subunit, mitochondrial (694 aa).

The transit peptide at 1 to 42 (MLRSRQATNALRAVGQTRPLRSQTAVAFTQSLNKVPSNRRSE) directs the protein to the mitochondrion. Positions 45-58 (VATASSTASGAFNS) are enriched in low complexity. The disordered stretch occupies residues 45–69 (VATASSTASGAFNSQVRPTPSPTFN). Positions 59 to 69 (QVRPTPSPTFN) are enriched in polar residues. Glu-140 is a thiamine diphosphate binding site. FAD is bound by residues Arg-242, 358-379 (HGSA…LGGR), and 410-429 (EIMP…IVGD). The interval 505–585 (QHQMWTAQHF…VKVIVLNNEE (81 aa)) is thiamine pyrophosphate binding. Mg(2+) is bound by residues Asp-556, Asn-583, and Glu-585.

This sequence belongs to the TPP enzyme family. Homodimer. It depends on Mg(2+) as a cofactor. Requires thiamine diphosphate as cofactor.

It is found in the mitochondrion. The enzyme catalyses 2 pyruvate + H(+) = (2S)-2-acetolactate + CO2. The catalysed reaction is 2-oxobutanoate + pyruvate + H(+) = (S)-2-ethyl-2-hydroxy-3-oxobutanoate + CO2. It participates in amino-acid biosynthesis; L-isoleucine biosynthesis; L-isoleucine from 2-oxobutanoate: step 1/4. Its pathway is amino-acid biosynthesis; L-valine biosynthesis; L-valine from pyruvate: step 1/4. Acetolactate synthase catalytic subunit, mitochondrial; part of the gene cluster that mediates the biosynthesis of chlorflavonin, a fungal flavonoid with acetolactate synthase inhibitory activity. Is not direcly involved in chlorflavonin biosynthesis but acts as a self-resistant protein that effectively confers chlorflavonin resistance to the native host. As a catalytic subunit of mitochondrial acetolactate synthase, catalyzes the first of a series of common steps in the biosynthesis of the branched-chain amino acids. Catalyzes the irreversible decarboxylation of pyruvate to a bound hydroxyethyl group that then condenses with either a second pyruvate molecule to form 2-acetolactate (AL) or with 2-ketobutyrate to form 2-aceto-2-hydroxybutyrate (AHB). The first product is the precursor for valine and leucine biosynthesis, while the second leads to isoleucine. The polypeptide is Acetolactate synthase catalytic subunit, mitochondrial (Aspergillus candidus).